Here is a 347-residue protein sequence, read N- to C-terminus: Cell shape-determining protein MreB (347 aa).

Residues 19-21 (TAN), 165-167 (GGT), 213-216 (ERIK), and 295-298 (GGAL) contribute to the ATP site.

This sequence belongs to the FtsA/MreB family. Forms polymers in the presence of ATP. Forms pairs of protofilaments that adopt an antiparallel arrangement and bind to lipids.

It localises to the cytoplasm. Its function is as follows. Forms membrane-associated dynamic filaments that are essential for cell shape determination. Acts by regulating cell wall synthesis and cell elongation, and thus cell shape. A feedback loop between cell geometry and MreB localization may maintain elongated cell shape by targeting cell wall growth to regions of negative cell wall curvature. Required for mid-cell peptidoglycan synthesis and cell division. Directs the localization of the cytosolic peptidoglycan precursor-synthesizing enzyme MurG. Also required for proper chromosome segregation. Directs the segregation of origin-proximal but not origin-distal loci. In Caulobacter vibrioides (strain NA1000 / CB15N) (Caulobacter crescentus), this protein is Cell shape-determining protein MreB.